A 116-amino-acid polypeptide reads, in one-letter code: SGSCSLKTCWLQLADFRKVGDALKEKYDSAAAMKLNSRGKLVQMNSRFNAPTIHDLIYIDPSPDYCMRNESTGSLGTQGRLCNKTSEGMDGCELMCCGRGYDQFKTVERERCNCKF.

A lipid anchor (O-palmitoleoyl serine; by PORCN) is attached at Ser1. N-linked (GlcNAc...) asparagine glycans are attached at residues Asn69 and Asn83. A disulfide bridge connects residues Cys82 and Cys97.

This sequence belongs to the Wnt family. In terms of processing, palmitoleoylation is required for efficient binding to frizzled receptors. Depalmitoleoylation leads to Wnt signaling pathway inhibition.

Its subcellular location is the secreted. It localises to the extracellular space. The protein localises to the extracellular matrix. Its function is as follows. Ligand for members of the frizzled family of seven transmembrane receptors. Can activate or inhibit canonical Wnt signaling, depending on receptor context. Required during embryogenesis for extension of the primary anterior-posterior axis. This is Protein Wnt-5a (WNT5A) from Meleagris gallopavo (Wild turkey).